A 420-amino-acid chain; its full sequence is Gamma-glutamyl phosphate reductase (420 aa).

The protein belongs to the gamma-glutamyl phosphate reductase family.

The protein resides in the cytoplasm. The catalysed reaction is L-glutamate 5-semialdehyde + phosphate + NADP(+) = L-glutamyl 5-phosphate + NADPH + H(+). The protein operates within amino-acid biosynthesis; L-proline biosynthesis; L-glutamate 5-semialdehyde from L-glutamate: step 2/2. In terms of biological role, catalyzes the NADPH-dependent reduction of L-glutamate 5-phosphate into L-glutamate 5-semialdehyde and phosphate. The product spontaneously undergoes cyclization to form 1-pyrroline-5-carboxylate. The polypeptide is Gamma-glutamyl phosphate reductase (Acidiphilium cryptum (strain JF-5)).